The primary structure comprises 389 residues: Flavin-dependent monooxygenase (389 aa).

FAD is bound by residues Ala12–Ala15, Glu34–Lys35, Gln44, Arg105, Tyr267, and Asp289.

It belongs to the aromatic-ring hydroxylase family. Requires FAD as cofactor.

The catalysed reaction is a tetracycline + NADPH + O2 + H(+) = a (1S,10aS)-3-(CONH2)-1-(Me2N)-3,3a,4,6-(HO)4-2,5-dioxo-1H,10aH,11H,11aH-cyclopenta[b]anthracene + CO + NADP(+) + H2O. It carries out the reaction 7-chlorotetracycline + NADPH + O2 + H(+) = (1S,10S,10aS)-3-(CONH2)-9-Cl-1-(Me2N)-3,3a,4,10-(HO)4-10-Me-2,5-dioxo-1H,10aH,11H,11aH-cyclopenta[b]anthracen-6-olate + CO + NADP(+) + H2O. Its activity is regulated as follows. Inhibited by anhydrotetracycline. An FAD-requiring monooxygenase active on tetracycline antibiotic and some of its derivatives, which leads to their inactivation. Expression in E.coli confers high resistance to tetracycline and oxytetracycline, does not confer resistance to minocycline or tigecycline. The reaction requires NADPH. Expression in L.pneumophila confers resistance to tetracycline. Degrades and confers resistance to tetracycline and chlortetracycline. The chain is Flavin-dependent monooxygenase (tet(56)) from Legionella longbeachae serogroup 1 (strain NSW150).